The following is a 537-amino-acid chain: MVILVHCVMGQIHWTNLSTIGIIGTDSSHYKIMTRSSHQYLVLKLMPNVSIIDNCTKAELDEYEKLLNSVLEPINQALTLMTKNVKSLQSLGSGRRQRRFAGVVIAGAALGVATAAQITAGVALYQSNLNAQAIQSLRASLEQSNKAIDEVRQASQNIIIAVQGVQDYVNNEIVPALQHMSCELIGQRLGLKLLRYYTELLSVFGPSLRDPISAEISIQALSYALGGEIHKILEKLGYSGNDMVAILETKGIRAKITHVDLSGKFIVLSISYPTLSEVKGVVVHRLEAVSYNIGSQEWYTTVPRYVATNGYLISNFDESSCVFVSESAICSQNSLYPMSPILQQCLRGETASCARTLVSGTLGNKFILSKGNIIANCASILCKCHSTSKIINQSPDKLLTFIASDTCSLVEIDGVTIQVGSRQYPDVVYASKVILGPAISLERLDVGTNLGSALKKLDDAKVLIESSDQILDTVKNSYLSLGTLIALPVSIGLGLILLLLICCCKKRYQHLFSQSTKVAPVFKPDLTGTSKSYVRSL.

The signal sequence occupies residues 1–10 (MVILVHCVMG). Residues 11-483 (QIHWTNLSTI…VKNSYLSLGT (473 aa)) are Extracellular-facing. N16, N48, and N54 each carry an N-linked (GlcNAc...) asparagine; by host glycan. Residues 100–124 (FAGVVIAGAALGVATAAQITAGVAL) are fusion peptide. The stretch at 125-153 (YQSNLNAQAIQSLRASLEQSNKAIDEVRQ) forms a coiled coil. Disulfide bonds link C321/C330, C345/C353, C377/C382, and C384/C407. Positions 449–474 (NLGSALKKLDDAKVLIESSDQILDTV) form a coiled coil. A helical transmembrane segment spans residues 484-504 (LIALPVSIGLGLILLLLICCC). Topologically, residues 505–537 (KKRYQHLFSQSTKVAPVFKPDLTGTSKSYVRSL) are cytoplasmic.

The protein belongs to the paramyxoviruses fusion glycoprotein family. As to quaternary structure, homotrimer of disulfide-linked F1-F2. In terms of processing, the inactive precursor F0 is glycosylated and proteolytically cleaved into F1 and F2 to be functionally active. The cleavage is mediated by cellular proteases during the transport and maturation of the polypeptide.

It is found in the virion membrane. The protein resides in the host cell membrane. In terms of biological role, class I viral fusion protein. Under the current model, the protein has at least 3 conformational states: pre-fusion native state, pre-hairpin intermediate state, and post-fusion hairpin state. During viral and plasma cell membrane fusion, the heptad repeat (HR) regions assume a trimer-of-hairpins structure, positioning the fusion peptide in close proximity to the C-terminal region of the ectodomain. The formation of this structure appears to drive apposition and subsequent fusion of viral and plasma cell membranes. Directs fusion of viral and cellular membranes leading to delivery of the nucleocapsid into the cytoplasm. This fusion is pH independent and occurs directly at the outer cell membrane. The trimer of F1-F2 (F protein) probably interacts with H at the virion surface. Upon HN binding to its cellular receptor, the hydrophobic fusion peptide is unmasked and interacts with the cellular membrane, inducing the fusion between cell and virion membranes. Later in infection, F proteins expressed at the plasma membrane of infected cells could mediate fusion with adjacent cells to form syncytia, a cytopathic effect that could lead to tissue necrosis. This Phocine distemper virus (PDV) protein is Fusion glycoprotein F0 (F).